The primary structure comprises 58 residues: Small ribosomal subunit protein bS21A (58 aa).

The disordered stretch occupies residues 38-58; the sequence is YEKPSLRRKRKAEAARKGGRN. Basic and acidic residues predominate over residues 49-58; sequence AEAARKGGRN.

The protein belongs to the bacterial ribosomal protein bS21 family.

This Trichormus variabilis (strain ATCC 29413 / PCC 7937) (Anabaena variabilis) protein is Small ribosomal subunit protein bS21A.